We begin with the raw amino-acid sequence, 861 residues long: Leucine--tRNA ligase (861 aa).

Residues 42-52 (PYPSGKLHMGH) carry the 'HIGH' region motif. Residues 620-624 (KMSKS) carry the 'KMSKS' region motif. Residue lysine 623 participates in ATP binding.

Belongs to the class-I aminoacyl-tRNA synthetase family.

The protein localises to the cytoplasm. The catalysed reaction is tRNA(Leu) + L-leucine + ATP = L-leucyl-tRNA(Leu) + AMP + diphosphate. The polypeptide is Leucine--tRNA ligase (Marinobacter nauticus (strain ATCC 700491 / DSM 11845 / VT8) (Marinobacter aquaeolei)).